The sequence spans 371 residues: Barbiturase 1 (371 aa).

The RU A stretch occupies residues 1 to 103 (MPDAIEVRKV…TIFATVPPED (103 aa)). Residues arginine 53 and 82-83 (SG) contribute to the substrate site. Residues 115–250 (RLTVGFAMSE…AQVVVVGNAP (136 aa)) are RU B. Lysine 165 is an active-site residue. Substrate is bound by residues asparagine 197 and 233 to 234 (SS). Residue serine 233 is the Nucleophile of the active site. Positions 256–371 (YRIGHSVMKD…GPVAAIVDLG (116 aa)) are RU C. Glutamate 304 provides a ligand contact to Mg(2+). Residues lysine 331 and 350 to 351 (SV) each bind substrate. Residues alanine 353, glutamine 356, glycine 357, proline 358, and glycine 361 each coordinate Mg(2+).

This sequence belongs to the cyclic amide hydrolase (CyAH) family. As to quaternary structure, homotetramer.

The catalysed reaction is barbiturate + H2O = 3-oxo-3-ureidopropanoate. It functions in the pathway pyrimidine metabolism; uracil degradation via oxidative pathway; malonate and urea from uracil: step 2/3. With respect to regulation, inhibited by cyanuric acid. Responsible for the hydrolysis of barbituric acid (2,4,6-trihydroxy-1,3-pyrimidine), an intermediate in the oxidative catabolism of pyrimidines. Catalyzes the hydrolytic opening of the pyrimidine ring of barbituric acid to yield ureidomalonic acid. The protein is Barbiturase 1 of Nocardioides sp. (strain ATCC BAA-499 / JS614).